The primary structure comprises 351 residues: Protein RecA (351 aa).

An ATP-binding site is contributed by 68–75; that stretch reads GPESSGKT.

The protein belongs to the RecA family.

Its subcellular location is the cytoplasm. Can catalyze the hydrolysis of ATP in the presence of single-stranded DNA, the ATP-dependent uptake of single-stranded DNA by duplex DNA, and the ATP-dependent hybridization of homologous single-stranded DNAs. It interacts with LexA causing its activation and leading to its autocatalytic cleavage. The chain is Protein RecA from Chloroflexus aurantiacus (strain ATCC 29364 / DSM 637 / Y-400-fl).